Reading from the N-terminus, the 193-residue chain is Holliday junction branch migration complex subunit RuvA (193 aa).

The segment at 1–64 (MIGRIAGILL…EDAHLLYGFL (64 aa)) is domain I. The tract at residues 65 to 139 (TPQERTTFRE…GKLGADLGAL (75 aa)) is domain II. Residues 139-143 (LAGAA) form a flexible linker region. The segment at 144-193 (SQSDHAADILNALVALGYSEKEGLAAIKNVPAGTGVSEGIKLALKALSKV) is domain III.

This sequence belongs to the RuvA family. As to quaternary structure, homotetramer. Forms an RuvA(8)-RuvB(12)-Holliday junction (HJ) complex. HJ DNA is sandwiched between 2 RuvA tetramers; dsDNA enters through RuvA and exits via RuvB. An RuvB hexamer assembles on each DNA strand where it exits the tetramer. Each RuvB hexamer is contacted by two RuvA subunits (via domain III) on 2 adjacent RuvB subunits; this complex drives branch migration. In the full resolvosome a probable DNA-RuvA(4)-RuvB(12)-RuvC(2) complex forms which resolves the HJ.

It localises to the cytoplasm. In terms of biological role, the RuvA-RuvB-RuvC complex processes Holliday junction (HJ) DNA during genetic recombination and DNA repair, while the RuvA-RuvB complex plays an important role in the rescue of blocked DNA replication forks via replication fork reversal (RFR). RuvA specifically binds to HJ cruciform DNA, conferring on it an open structure. The RuvB hexamer acts as an ATP-dependent pump, pulling dsDNA into and through the RuvAB complex. HJ branch migration allows RuvC to scan DNA until it finds its consensus sequence, where it cleaves and resolves the cruciform DNA. The protein is Holliday junction branch migration complex subunit RuvA of Burkholderia ambifaria (strain ATCC BAA-244 / DSM 16087 / CCUG 44356 / LMG 19182 / AMMD) (Burkholderia cepacia (strain AMMD)).